The chain runs to 382 residues: Protein delta homolog 2 (382 aa).

Residues 1 to 26 (MPSGCRCLNLVCLLCILGATSQPARA) form the signal peptide. EGF-like domains lie at 27–58 (DDCS…LHCE), 62–89 (RMPG…KFCD), 91–129 (DEHI…RGCE), and 131–172 (KAGP…AHCE). The Extracellular segment spans residues 27-305 (DDCSSHCDLA…RQEAGLGESS (279 aa)). 17 cysteine pairs are disulfide-bonded: Cys29–Cys40, Cys33–Cys46, Cys48–Cys57, Cys66–Cys71, Cys79–Cys88, Cys95–Cys107, Cys101–Cys117, Cys119–Cys128, Cys135–Cys148, Cys142–Cys160, Cys162–Cys171, Cys178–Cys189, Cys183–Cys198, Cys200–Cys209, Cys216–Cys227, Cys221–Cys236, and Cys238–Cys247. Asn157 carries an N-linked (GlcNAc...) asparagine glycan. One can recognise an EGF-like 5; calcium-binding domain in the interval 174-210 (NVDDCLMRPCANGATCIDGINRFSCLCPEGFAGRFCT). Residues 212–248 (NLDDCASRPCQRGARCRDRVHDFDCLCPSGYGGKTCE) enclose the EGF-like 6; calcium-binding domain. A helical membrane pass occupies residues 306–326 (LVALVVFGSLTAALVLATVLL). The Cytoplasmic portion of the chain corresponds to 327-382 (TLRAWRRGICPTGPCCDPAPHYAPARQDQECQVSMLPAGFPLSPDLPPEPGKTTAL).

It is found in the membrane. Regulates adipogenesis. In Rattus norvegicus (Rat), this protein is Protein delta homolog 2 (Dlk2).